Here is a 158-residue protein sequence, read N- to C-terminus: Regulator of sigma D (158 aa).

Belongs to the Rsd/AlgQ family. Interacts with RpoD.

It is found in the cytoplasm. Functionally, binds RpoD and negatively regulates RpoD-mediated transcription activation by preventing the interaction between the primary sigma factor RpoD with the catalytic core of the RNA polymerase and with promoter DNA. May be involved in replacement of the RNA polymerase sigma subunit from RpoD to RpoS during the transition from exponential growth to the stationary phase. The protein is Regulator of sigma D of Escherichia coli O127:H6 (strain E2348/69 / EPEC).